A 455-amino-acid polypeptide reads, in one-letter code: Bifunctional protein GlmU (455 aa).

Positions M1–K225 are pyrophosphorylase. UDP-N-acetyl-alpha-D-glucosamine-binding positions include L6–G9, K20, Q71, G76–T77, Y98–D100, G135, E150, N165, and N223. D100 contributes to the Mg(2+) binding site. N223 serves as a coordination point for Mg(2+). The linker stretch occupies residues V226–D246. The interval G247–G455 is N-acetyltransferase. Positions 329 and 347 each coordinate UDP-N-acetyl-alpha-D-glucosamine. H359 acts as the Proton acceptor in catalysis. UDP-N-acetyl-alpha-D-glucosamine-binding residues include Y362 and N373. Acetyl-CoA-binding positions include A376, N382–Y383, S401, A419, and R436.

This sequence in the N-terminal section; belongs to the N-acetylglucosamine-1-phosphate uridyltransferase family. The protein in the C-terminal section; belongs to the transferase hexapeptide repeat family. Homotrimer. Mg(2+) is required as a cofactor.

The protein resides in the cytoplasm. The catalysed reaction is alpha-D-glucosamine 1-phosphate + acetyl-CoA = N-acetyl-alpha-D-glucosamine 1-phosphate + CoA + H(+). It catalyses the reaction N-acetyl-alpha-D-glucosamine 1-phosphate + UTP + H(+) = UDP-N-acetyl-alpha-D-glucosamine + diphosphate. It functions in the pathway nucleotide-sugar biosynthesis; UDP-N-acetyl-alpha-D-glucosamine biosynthesis; N-acetyl-alpha-D-glucosamine 1-phosphate from alpha-D-glucosamine 6-phosphate (route II): step 2/2. Its pathway is nucleotide-sugar biosynthesis; UDP-N-acetyl-alpha-D-glucosamine biosynthesis; UDP-N-acetyl-alpha-D-glucosamine from N-acetyl-alpha-D-glucosamine 1-phosphate: step 1/1. It participates in bacterial outer membrane biogenesis; LPS lipid A biosynthesis. Functionally, catalyzes the last two sequential reactions in the de novo biosynthetic pathway for UDP-N-acetylglucosamine (UDP-GlcNAc). The C-terminal domain catalyzes the transfer of acetyl group from acetyl coenzyme A to glucosamine-1-phosphate (GlcN-1-P) to produce N-acetylglucosamine-1-phosphate (GlcNAc-1-P), which is converted into UDP-GlcNAc by the transfer of uridine 5-monophosphate (from uridine 5-triphosphate), a reaction catalyzed by the N-terminal domain. In Ralstonia pickettii (strain 12J), this protein is Bifunctional protein GlmU.